We begin with the raw amino-acid sequence, 307 residues long: Olfactory receptor 5AC1 (307 aa).

Over 1-28 the chain is Extracellular; the sequence is MAEENKILVTHFVLTGLTDHPGLQAPLF. A helical transmembrane segment spans residues 29–49; the sequence is LVFLVIYLITLVGNLGLMALI. The Cytoplasmic portion of the chain corresponds to 50–56; the sequence is WKDPHLH. Residues 57–77 traverse the membrane as a helical segment; sequence TPIYLFLGSLAFADACTSSSV. Over 78-99 the chain is Extracellular; it reads TSKMLINFLSKNHMLSMAKCAT. A disulfide bridge links Cys-97 with Cys-179. A helical membrane pass occupies residues 100 to 120; it reads QFYFFGSNATTECFLLVVMAY. The Cytoplasmic portion of the chain corresponds to 121–143; that stretch reads DRYVAICNPLLYPVVMSNSLCTQ. A helical membrane pass occupies residues 144–164; that stretch reads FIGISYFIGFLHSAIHVGLLF. The Extracellular portion of the chain corresponds to 165 to 195; sequence RLTFCRSNIIHYFYCEILQLFKISCTNPTVN. The chain crosses the membrane as a helical span at residues 196 to 216; that stretch reads ILLIFIFSAFIQVFTFMTLIV. The Cytoplasmic segment spans residues 217–239; the sequence is SYSYILSAILKKKSEKGRSKAFS. Residues 240 to 260 traverse the membrane as a helical segment; the sequence is TCSAHLLSVSLFYGTLFFMYV. Over 261-271 the chain is Extracellular; sequence SSRSGSAADQA. The chain crosses the membrane as a helical span at residues 272–292; it reads KMYSLFYTIIIPLLNPFIYSL. The Cytoplasmic portion of the chain corresponds to 293–307; sequence RNKEVIDALRRIMKK.

Belongs to the G-protein coupled receptor 1 family.

The protein resides in the cell membrane. Odorant receptor. The chain is Olfactory receptor 5AC1 (OR5AC1) from Homo sapiens (Human).